We begin with the raw amino-acid sequence, 295 residues long: Excinuclease cho (295 aa).

The 76-residue stretch at 33-108 folds into the GIY-YIG domain; that stretch reads TRPGVYLFHG…IKEQQPLFNK (76 aa).

Functionally, incises the DNA at the 3' side of a lesion during nucleotide excision repair. Incises the DNA farther away from the lesion than UvrC. Not able to incise the 5' site of a lesion. In vitro, the incision activity of Cho is UvrA and UvrB dependent. When a lesion remains because UvrC is not able to induce the 3' incision, Cho incises the DNA. Then UvrC makes the 5' incision. The combined action of Cho and UvrC broadens the substrate range of nucleotide excision repair. The protein is Excinuclease cho (cho) of Escherichia coli (strain K12).